Reading from the N-terminus, the 203-residue chain is Imidazoleglycerol-phosphate dehydratase (203 aa).

The protein belongs to the imidazoleglycerol-phosphate dehydratase family.

It is found in the cytoplasm. The enzyme catalyses D-erythro-1-(imidazol-4-yl)glycerol 3-phosphate = 3-(imidazol-4-yl)-2-oxopropyl phosphate + H2O. The protein operates within amino-acid biosynthesis; L-histidine biosynthesis; L-histidine from 5-phospho-alpha-D-ribose 1-diphosphate: step 6/9. This chain is Imidazoleglycerol-phosphate dehydratase, found in Salinispora arenicola (strain CNS-205).